The following is a 564-amino-acid chain: Arginine--tRNA ligase (564 aa).

The 'HIGH' region signature appears at 122 to 132 (PNIAKPFSIGH).

It belongs to the class-I aminoacyl-tRNA synthetase family. Monomer.

It localises to the cytoplasm. It catalyses the reaction tRNA(Arg) + L-arginine + ATP = L-arginyl-tRNA(Arg) + AMP + diphosphate. In Lactococcus lactis subsp. cremoris (strain MG1363), this protein is Arginine--tRNA ligase.